Reading from the N-terminus, the 394-residue chain is Actin-related protein 2-A (394 aa).

Residues 160-162 (GDG), 214-218 (RMIKE), and 305-310 (GGSTMY) contribute to the ATP site.

The protein belongs to the actin family. ARP2 subfamily. As to quaternary structure, component of the Arp2/3 complex composed of actr2/arp2, actr3/arp3, arpc1 (arpc1a or arpc1b), arpc2, arpc3, arpc4 and arpc5.

The protein resides in the cytoplasm. The protein localises to the cytoskeleton. It localises to the cell projection. It is found in the nucleus. Functionally, ATP-binding component of the Arp2/3 complex, a multiprotein complex that mediates actin polymerization upon stimulation by nucleation-promoting factor (NPF). The Arp2/3 complex mediates the formation of branched actin networks in the cytoplasm, providing the force for cell motility. Seems to contact the pointed end of the daughter actin filament. In addition to its role in the cytoplasmic cytoskeleton, the Arp2/3 complex also promotes actin polymerization in the nucleus, thereby regulating gene transcription and repair of damaged DNA. The Arp2/3 complex promotes homologous recombination (HR) repair in response to DNA damage by promoting nuclear actin polymerization, leading to drive motility of double-strand breaks (DSBs). This chain is Actin-related protein 2-A (actr2-a), found in Xenopus laevis (African clawed frog).